The chain runs to 1081 residues: Zinc finger protein 827 (1081 aa).

The segment covering 1–10 (MPRRKQEQPK) has biased composition (basic and acidic residues). A mediates direct interaction with RBBP4 region spans residues 1-14 (MPRRKQEQPKRLPS). Positions 1 to 77 (MPRRKQEQPK…DTSLGSTTPS (77 aa)) are disordered. An RRK motif; mediates NuRD recruitment to telomeres motif is present at residues 3 to 5 (RRK). Residues 62-77 (EQSTSPDTSLGSTTPS) are compositionally biased toward polar residues. Glycyl lysine isopeptide (Lys-Gly) (interchain with G-Cter in SUMO2) cross-links involve residues Lys-176, Lys-216, and Lys-226. 2 disordered regions span residues 259-278 (KVSE…ASSF) and 307-348 (SSLL…SLEL). Pro residues predominate over residues 327 to 344 (VTPPPPPPPPPPPPPPPQ). Glycyl lysine isopeptide (Lys-Gly) (interchain with G-Cter in SUMO2) cross-links involve residues Lys-360 and Lys-372. C2H2-type zinc fingers lie at residues 374–396 (FQCP…MVIH), 402–424 (HQCP…MKVH), and 433–455 (FQCQ…MRCH). Residues Lys-466, Lys-475, Lys-523, Lys-549, Lys-580, Lys-587, Lys-597, Lys-634, Lys-639, and Lys-658 each participate in a glycyl lysine isopeptide (Lys-Gly) (interchain with G-Cter in SUMO2) cross-link. A Glycyl lysine isopeptide (Lys-Gly) (interchain with G-Cter in SUMO1); alternate cross-link involves residue Lys-673. Lys-673 participates in a covalent cross-link: Glycyl lysine isopeptide (Lys-Gly) (interchain with G-Cter in SUMO2); alternate. Residues Lys-704, Lys-710, Lys-742, Lys-778, and Lys-798 each participate in a glycyl lysine isopeptide (Lys-Gly) (interchain with G-Cter in SUMO2) cross-link. 2 consecutive C2H2-type zinc fingers follow at residues 817 to 839 (FPCD…LSLH) and 845 to 867 (YKCH…LTVH). Glycyl lysine isopeptide (Lys-Gly) (interchain with G-Cter in SUMO2) cross-links involve residues Lys-870 and Lys-891. C2H2-type zinc fingers lie at residues 897-919 (YSCH…MSLH) and 929-952 (ICCT…GTKH). The segment covering 947–960 (HIGTKHTGEDRKTP) has biased composition (basic and acidic residues). The disordered stretch occupies residues 947 to 996 (HIGTKHTGEDRKTPSESNSPSSSSLSALSDSANSKDDSDGSQKNKGGNNL). Residue Lys-958 forms a Glycyl lysine isopeptide (Lys-Gly) (interchain with G-Cter in SUMO2) linkage. The segment covering 961–978 (SESNSPSSSSLSALSDSA) has biased composition (low complexity). The segment covering 979–988 (NSKDDSDGSQ) has biased composition (basic and acidic residues). Lys-1014 participates in a covalent cross-link: Glycyl lysine isopeptide (Lys-Gly) (interchain with G-Cter in SUMO2). 2 C2H2-type zinc fingers span residues 1019-1041 (FECV…LQIH) and 1047-1069 (FECD…KKCH).

This sequence belongs to the krueppel C2H2-type zinc-finger protein family. As to quaternary structure, part of a transcription inhibitory ribonucleoprotein complex composed at least of the circular RNA circZNF827, HNRNPK and HNRNPL. Interacts with the nucleosome remodeling and histone deacetylase/NuRD complex. Interacts with RBBP4; the interaction is direct and recruits RBBP4, a component of the NuRD complex, to telomeres.

The protein localises to the nucleus. The protein resides in the chromosome. Its subcellular location is the telomere. In terms of biological role, as part of a ribonucleoprotein complex composed at least of HNRNPK, HNRNPL and the circular RNA circZNF827 that nucleates the complex on chromatin, may negatively regulate the transcription of genes involved in neuronal differentiation. Could also recruit the nucleosome remodeling and histone deacetylase/NuRD complex to telomeric regions of chromosomes to regulate chromatin remodeling as part of telomere maintenance. The protein is Zinc finger protein 827 (ZNF827) of Homo sapiens (Human).